The sequence spans 107 residues: UPF0213 protein SG0387 (107 aa).

The GIY-YIG domain maps to 4 to 79; the sequence is SLWHLYLIRT…KQLSRAQKEH (76 aa).

Belongs to the UPF0213 family.

The chain is UPF0213 protein SG0387 from Sodalis glossinidius (strain morsitans).